Consider the following 565-residue polypeptide: NAD-dependent malic enzyme (565 aa).

The active-site Proton donor is Tyr-104. Arg-157 lines the NAD(+) pocket. Lys-175 functions as the Proton acceptor in the catalytic mechanism. Positions 246, 247, and 270 each coordinate a divalent metal cation. NAD(+) contacts are provided by Asp-270 and Asn-418.

The protein belongs to the malic enzymes family. As to quaternary structure, homotetramer. It depends on Mg(2+) as a cofactor. Requires Mn(2+) as cofactor.

It catalyses the reaction (S)-malate + NAD(+) = pyruvate + CO2 + NADH. The catalysed reaction is oxaloacetate + H(+) = pyruvate + CO2. This chain is NAD-dependent malic enzyme, found in Edwardsiella ictaluri (strain 93-146).